A 330-amino-acid polypeptide reads, in one-letter code: Adenylate isopentenyltransferase 5, chloroplastic (330 aa).

A chloroplast-targeting transit peptide spans 1–39 (MKPCMTALRQVIQPLSLNFQGNMVDVPFFRRKDKVVFVM). 40–47 (GATGTGKS) serves as a coordination point for ATP.

The protein belongs to the IPP transferase family. As to expression, expressed in root primordia, columella root caps, upper part of young inflorescences, and fruit abscission zones.

It localises to the plastid. It is found in the chloroplast. It carries out the reaction dimethylallyl diphosphate + ADP = N(6)-(dimethylallyl)adenosine 5'-diphosphate + diphosphate. The enzyme catalyses dimethylallyl diphosphate + ATP = N(6)-(dimethylallyl)adenosine 5'-triphosphate + diphosphate. Its function is as follows. Involved in cytokinin biosynthesis. Catalyzes the transfer of an isopentenyl group from dimethylallyl diphosphate (DMAPP) to ATP and ADP. The sequence is that of Adenylate isopentenyltransferase 5, chloroplastic (IPT5) from Arabidopsis thaliana (Mouse-ear cress).